The chain runs to 463 residues: L-seryl-tRNA(Sec) selenium transferase (463 aa).

The residue at position 295 (lysine 295) is an N6-(pyridoxal phosphate)lysine.

This sequence belongs to the SelA family. In terms of assembly, homodecamer; pentamer of dimers. Binds only one seryl-tRNA(Sec) per dimer. Requires pyridoxal 5'-phosphate as cofactor.

It is found in the cytoplasm. It carries out the reaction L-seryl-tRNA(Sec) + selenophosphate + H(+) = L-selenocysteinyl-tRNA(Sec) + phosphate. It functions in the pathway aminoacyl-tRNA biosynthesis; selenocysteinyl-tRNA(Sec) biosynthesis; selenocysteinyl-tRNA(Sec) from L-seryl-tRNA(Sec) (bacterial route): step 1/1. Converts seryl-tRNA(Sec) to selenocysteinyl-tRNA(Sec) required for selenoprotein biosynthesis. This chain is L-seryl-tRNA(Sec) selenium transferase, found in Shigella boydii serotype 18 (strain CDC 3083-94 / BS512).